The sequence spans 645 residues: Chaperone protein DnaK (645 aa).

Position 200 is a phosphothreonine; by autocatalysis (Thr200). Positions 603-645 (AYSAQKDSGTSTDSTASDTSGNPEERVVDSEYQEIKKDDEDKK) are disordered. The span at 609–623 (DSGTSTDSTASDTSG) shows a compositional bias: low complexity. A compositionally biased stretch (basic and acidic residues) spans 625–645 (PEERVVDSEYQEIKKDDEDKK).

The protein belongs to the heat shock protein 70 family.

Acts as a chaperone. This Anaplasma marginale (strain St. Maries) protein is Chaperone protein DnaK.